Reading from the N-terminus, the 186-residue chain is MRDQKALSVRTVVAIGIGTAILFILKRFAVIPTGIANTNIDISYGFLGFIATLFGPIAGFFIGFLGHALNDFTQYGTPWWTWVFTTGLVGMVIGLFWRRFNVEAGNFGMKKIVSFNLLQIITNVVSWSLIAPTLDIWIYSEPANKVYVQGIVSAISNSIATGVIGTILLVTYAATRTRSGSLKKES.

The next 5 membrane-spanning stretches (helical) occupy residues 12–32 (VVAI…AVIP), 45–65 (GFLG…IGFL), 77–97 (TPWW…GLFW), 112–132 (IVSF…LIAP), and 150–170 (GIVS…ILLV).

It belongs to the UPF0397 family.

The protein localises to the cell membrane. The protein is UPF0397 protein LCABL_04350 of Lacticaseibacillus casei (strain BL23) (Lactobacillus casei).